Consider the following 342-residue polypeptide: N-acetyl-gamma-glutamyl-phosphate reductase (342 aa).

Cysteine 149 is a catalytic residue.

The protein belongs to the NAGSA dehydrogenase family. Type 1 subfamily.

It is found in the cytoplasm. It catalyses the reaction N-acetyl-L-glutamate 5-semialdehyde + phosphate + NADP(+) = N-acetyl-L-glutamyl 5-phosphate + NADPH + H(+). Its pathway is amino-acid biosynthesis; L-arginine biosynthesis; N(2)-acetyl-L-ornithine from L-glutamate: step 3/4. Its function is as follows. Catalyzes the NADPH-dependent reduction of N-acetyl-5-glutamyl phosphate to yield N-acetyl-L-glutamate 5-semialdehyde. In Aromatoleum aromaticum (strain DSM 19018 / LMG 30748 / EbN1) (Azoarcus sp. (strain EbN1)), this protein is N-acetyl-gamma-glutamyl-phosphate reductase.